Here is a 204-residue protein sequence, read N- to C-terminus: Ras-related protein Rab-1D (204 aa).

GTP is bound by residues 17-25 (GDSGVGKSC), 35-42 (WTDTHIST), 65-69 (DTAGQ), 123-126 (NKTD), and 153-155 (SAK). The Effector region motif lies at 39-47 (HISTIGVDF). Residues 182–191 (PKPDEVDIKS) show a composition bias toward basic and acidic residues. The tract at residues 182-204 (PKPDEVDIKSKNKTKSGGKKSFC) is disordered. Over residues 192 to 204 (KNKTKSGGKKSFC) the composition is skewed to basic residues. The S-geranylgeranyl cysteine moiety is linked to residue cysteine 204.

Belongs to the small GTPase superfamily. Rab family.

The protein resides in the cell membrane. The chain is Ras-related protein Rab-1D (rab1D) from Dictyostelium discoideum (Social amoeba).